The sequence spans 62 residues: Mu-elapitoxin-Na1a (62 aa).

4 cysteine pairs are disulfide-bonded: cysteine 3-cysteine 22, cysteine 15-cysteine 40, cysteine 44-cysteine 55, and cysteine 56-cysteine 61.

The protein belongs to the three-finger toxin family. Short-chain subfamily. Orphan group XV sub-subfamily. Expressed by the venom gland.

It is found in the secreted. In terms of biological role, potent inhibitor of human Nav1.8/SCN10A (IC(50)=141-380 nM). Is highly selective for this channel and acts in a reversible manner. Shows a depolarizing shift of activation and hyperpolarizing shift of inactivation. In contrast to the very similar cytotoxin A5 (AC P62375), does not seem to bind integrin alpha-V/beta-3, since it does not promote or inhibit the proliferation of HUVECs and C-PAE cells. In vivo, in rodent models of inflammatory and neuropathic pain, it alleviates nociceptive behaviors more potently than does morphine. It displays no evident cytotoxic, hemolytic and cardiotoxic activities and produces no obvious adverse responses in mice even at a dose 30-fold higher than that producing a significant analgesic effect. This Naja atra (Chinese cobra) protein is Mu-elapitoxin-Na1a.